A 343-amino-acid polypeptide reads, in one-letter code: Putative trace amine-associated receptor 3 (343 aa).

The Extracellular segment spans residues 1-35 (MDLTYIPEDLSSCPKFVNKILSSHQPLFSCPGDNV). Residues 36–56 (FGYDWSHDYPLFGNLVIMVSI) traverse the membrane as a helical segment. Residues 57–68 (SHFKQLHSPTNF) are Cytoplasmic-facing. The chain crosses the membrane as a helical span at residues 69-89 (LILSMATTDFLLGFVIMPYSI). The Extracellular segment spans residues 90–150 (MRSVESCWYF…TKMTNSTIKQ (61 aa)). A disulfide bridge connects residues cysteine 104 and cysteine 189. Asparagine 145 is a glycosylation site (N-linked (GlcNAc...) asparagine). The chain crosses the membrane as a helical span at residues 151–168 (LLAFCWSVPALFSFGLVL). At 169–172 (SEAD) the chain is on the cytoplasmic side. The segment at 173–186 (VSGMQSYKILVACF) is extracellular Loop 2 (ECL2). A helical transmembrane segment spans residues 173 to 193 (VSGMQSYKILVACFNFCALTF). Residues 194 to 198 (NKFWG) lie on the Extracellular side of the membrane. Residues 199-223 (TILFTTCFFTPGSIMVGIYGKIFIV) form a helical membrane-spanning segment. Residues 224–257 (SKQHARVISHVPENTKGAVKKHLSKKKDRKAAKT) lie on the Cytoplasmic side of the membrane. Residues 258-278 (LGIVMGVFLACWLPCFLAVLI) traverse the membrane as a helical segment. At 279 to 287 (DPYLDYSTP) the chain is on the extracellular side. The helical transmembrane segment at 288–308 (ILILDLLVWLRYFNSTCNPLI) threads the bilayer. The Cytoplasmic segment spans residues 309–343 (HGFFNPWFQKAFKYIVSGKIFSSHSETANLFPEAH).

It belongs to the G-protein coupled receptor 1 family. As to expression, not expressed in the pons, thalamus, globus pallidus, caudate, putamen or cerebellum.

It is found in the cell membrane. In terms of biological role, putative olfactory receptor activated by several primary trace amines. In Homo sapiens (Human), this protein is Putative trace amine-associated receptor 3.